The following is a 238-amino-acid chain: tRNA (guanine-N(7)-)-methyltransferase (238 aa).

Glu-68, Glu-93, Asp-120, and Asp-143 together coordinate S-adenosyl-L-methionine. The active site involves Asp-143. Substrate contacts are provided by residues Lys-147, Asp-179, and Thr-216–Glu-219.

Belongs to the class I-like SAM-binding methyltransferase superfamily. TrmB family.

It catalyses the reaction guanosine(46) in tRNA + S-adenosyl-L-methionine = N(7)-methylguanosine(46) in tRNA + S-adenosyl-L-homocysteine. Its pathway is tRNA modification; N(7)-methylguanine-tRNA biosynthesis. Catalyzes the formation of N(7)-methylguanine at position 46 (m7G46) in tRNA. The sequence is that of tRNA (guanine-N(7)-)-methyltransferase from Shewanella sp. (strain MR-4).